A 552-amino-acid polypeptide reads, in one-letter code: Dihydroxy-acid dehydratase (552 aa).

Asp78 serves as a coordination point for Mg(2+). Cys119 provides a ligand contact to [2Fe-2S] cluster. The Mg(2+) site is built by Asp120 and Lys121. Lys121 is modified (N6-carboxylysine). Residue Cys191 coordinates [2Fe-2S] cluster. Glu442 is a Mg(2+) binding site. The Proton acceptor role is filled by Ser468.

The protein belongs to the IlvD/Edd family. As to quaternary structure, homodimer. [2Fe-2S] cluster serves as cofactor. Requires Mg(2+) as cofactor.

The enzyme catalyses (2R)-2,3-dihydroxy-3-methylbutanoate = 3-methyl-2-oxobutanoate + H2O. It carries out the reaction (2R,3R)-2,3-dihydroxy-3-methylpentanoate = (S)-3-methyl-2-oxopentanoate + H2O. It functions in the pathway amino-acid biosynthesis; L-isoleucine biosynthesis; L-isoleucine from 2-oxobutanoate: step 3/4. It participates in amino-acid biosynthesis; L-valine biosynthesis; L-valine from pyruvate: step 3/4. Functionally, functions in the biosynthesis of branched-chain amino acids. Catalyzes the dehydration of (2R,3R)-2,3-dihydroxy-3-methylpentanoate (2,3-dihydroxy-3-methylvalerate) into 2-oxo-3-methylpentanoate (2-oxo-3-methylvalerate) and of (2R)-2,3-dihydroxy-3-methylbutanoate (2,3-dihydroxyisovalerate) into 2-oxo-3-methylbutanoate (2-oxoisovalerate), the penultimate precursor to L-isoleucine and L-valine, respectively. The sequence is that of Dihydroxy-acid dehydratase from Caldicellulosiruptor bescii (strain ATCC BAA-1888 / DSM 6725 / KCTC 15123 / Z-1320) (Anaerocellum thermophilum).